The primary structure comprises 469 residues: 3-isopropylmalate dehydratase large subunit (469 aa).

[4Fe-4S] cluster is bound by residues cysteine 347, cysteine 410, and cysteine 413.

Belongs to the aconitase/IPM isomerase family. LeuC type 1 subfamily. Heterodimer of LeuC and LeuD. [4Fe-4S] cluster is required as a cofactor.

It catalyses the reaction (2R,3S)-3-isopropylmalate = (2S)-2-isopropylmalate. It participates in amino-acid biosynthesis; L-leucine biosynthesis; L-leucine from 3-methyl-2-oxobutanoate: step 2/4. Its function is as follows. Catalyzes the isomerization between 2-isopropylmalate and 3-isopropylmalate, via the formation of 2-isopropylmaleate. This Burkholderia lata (strain ATCC 17760 / DSM 23089 / LMG 22485 / NCIMB 9086 / R18194 / 383) protein is 3-isopropylmalate dehydratase large subunit.